Reading from the N-terminus, the 523-residue chain is Pentatricopeptide repeat-containing protein At1g64580 (523 aa).

13 PPR repeats span residues 43–77 (HHHHYRERLRNELHCIKFDDAFSLFCEMLQSRPIP), 78–112 (SIVDFTRVLTVIAKMNKFDIVIYLYHKMENLGISH), 113–147 (DLYSFTILIHCFCRCSRLSLALALLGKMMKLGFRP), 148–182 (SIVTLGSLLNGFCQGNRFQEAVSLVDSMDGFGFVP), 183–217 (NVVIYNTVINGLCKNRDLNNALEVFYCMEKKGIRA), 218–252 (DAVTYNTLISGLSNSGRWTDAARLLRDMVKRKIDP), 253–287 (NVIFFTALIDTFVKEGNLLEARNLYKEMIRRSVVP), 288–322 (NVFTYNSLINGFCIHGCLGDAKYMFDLMVSKGCFP), 323–357 (DVVTYNTLITGFCKSKRVEDGMKLFCEMTYQGLVG), 358–392 (DAFTYNTLIHGYCQAGKLNVAQKVFNRMVDCGVSP), 393–427 (DIVTYNILLDCLCNNGKIEKALVMVEDLQKSEMDV), 428–462 (DIITYNIIIQGLCRTDKLKEAWCLFRSLTRKGVKP), and 463–497 (DAIAYITMISGLCRKGLQREADKLCRRMKEDGFMP).

The protein belongs to the PPR family. P subfamily.

The protein is Pentatricopeptide repeat-containing protein At1g64580 of Arabidopsis thaliana (Mouse-ear cress).